We begin with the raw amino-acid sequence, 401 residues long: Phosphoglycerate kinase (401 aa).

Residues D24 to N26, R40, H63 to R66, R122, and R155 contribute to the substrate site. ATP-binding positions include K206, G297, E328, and G357 to S360.

This sequence belongs to the phosphoglycerate kinase family. As to quaternary structure, monomer.

The protein localises to the cytoplasm. The catalysed reaction is (2R)-3-phosphoglycerate + ATP = (2R)-3-phospho-glyceroyl phosphate + ADP. It participates in carbohydrate degradation; glycolysis; pyruvate from D-glyceraldehyde 3-phosphate: step 2/5. In Acaryochloris marina (strain MBIC 11017), this protein is Phosphoglycerate kinase.